We begin with the raw amino-acid sequence, 501 residues long: Lysine--tRNA ligase (501 aa).

Mg(2+)-binding residues include Glu411 and Glu418.

The protein belongs to the class-II aminoacyl-tRNA synthetase family. As to quaternary structure, homodimer. Mg(2+) serves as cofactor.

It localises to the cytoplasm. The catalysed reaction is tRNA(Lys) + L-lysine + ATP = L-lysyl-tRNA(Lys) + AMP + diphosphate. The polypeptide is Lysine--tRNA ligase (Pseudomonas aeruginosa (strain UCBPP-PA14)).